A 439-amino-acid polypeptide reads, in one-letter code: MKSIVISSNSSGGGKTTIAVGIMKALMKKGFDVQGYKVGPDYIDPAFHSQITGKPSRNLDIYLTGEEGVKASYSRGKGNLGVVEGVMGLYDGKGIDSKYSTAHVAKTLGLPVVLVLSPKAQSATLCAEINGLINFDKVEIGGIILNNISESYYNLLKAAIEYNCNAKVLGYIPKDERLKIGSRHLGLIQSSEIEDLEEKIDICSEHILKNIDLEELFKIFKKTPEYEDNFHLENKNLKIAVAYDKAFSFYYRDNIELLEELGEITYFSPLMDKELPKDIDFLYIGGGYPEVFIEELSKNESMLKSIKEELDKGLKCYAECGGLMYLTEAIENEDLKGNAVGYFEGFSKMTKRLQNFGYAQLEVYKENEILPKGLKINCHEFHKSTVELDEDKIFKINKTMYNGDTKHWNCGYIKGNTIAAYAHVNFLGNIEFLKALLEK.

The region spanning 238-431 (KIAVAYDKAF…AHVNFLGNIE (194 aa)) is the GATase cobBQ-type domain. Cysteine 320 acts as the Nucleophile in catalysis.

It belongs to the CobB/CbiA family. Mg(2+) serves as cofactor.

The catalysed reaction is cob(II)yrinate + 2 L-glutamine + 2 ATP + 2 H2O = cob(II)yrinate a,c diamide + 2 L-glutamate + 2 ADP + 2 phosphate + 2 H(+). Its pathway is cofactor biosynthesis; adenosylcobalamin biosynthesis; cob(II)yrinate a,c-diamide from sirohydrochlorin (anaerobic route): step 10/10. Its function is as follows. Catalyzes the ATP-dependent amidation of the two carboxylate groups at positions a and c of cobyrinate, using either L-glutamine or ammonia as the nitrogen source. The polypeptide is Cobyrinate a,c-diamide synthase (Clostridium tetani (strain Massachusetts / E88)).